A 1117-amino-acid chain; its full sequence is Leucine-rich repeats and immunoglobulin-like domains protein 3 (1117 aa).

Residues 1–24 (MGAPGLRAATAALGLLLCAGLGRA) form the signal peptide. One can recognise an LRRNT domain in the interval 38–74 (LLDDDAQRPCPAACHCLGDLLDCSRRRLVRLPDPLPA). 15 LRR repeats span residues 75-98 (WVTR…SHLQ), 99-120 (SLQE…GSIS), 122-143 (NIRQ…QLEA), 146-168 (SLET…PPLQ), 169-189 (LKYL…YFDN), 193-214 (TLLV…MFKL), 216-237 (QLQH…TFQG), 240-261 (ALKS…AFWG), 264-285 (NMEV…WLYG), 288-309 (MLRE…AWEF), 312-333 (KLSE…SFLG), 336-357 (LLNA…AFRG), 360-382 (SLKT…SGAF), 387-408 (RLRQ…AFAG), and 411-432 (TLEH…AFSQ). Residue Asn-156 is glycosylated (N-linked (GlcNAc...) asparagine). Asn-274 carries N-linked (GlcNAc...) asparagine glycosylation. Residues Asn-442 and Asn-469 are each glycosylated (N-linked (GlcNAc...) asparagine). Residues 444-495 (SSLLCDCQLRWLPQWVAENNFQSFVNASCAHPQLLKGRSIFTVSPDGFVCDD) enclose the LRRCT domain. Ig-like C2-type domains are found at residues 499 to 598 (PQIT…AKLT), 603 to 692 (PSFT…ATLT), and 697 to 783 (PSFL…VRLS). 2 cysteine pairs are disulfide-bonded: Cys-520–Cys-581 and Cys-624–Cys-676. Residues Asn-688 and Asn-729 are each glycosylated (N-linked (GlcNAc...) asparagine). A disulfide bridge links Cys-718 with Cys-767. The helical transmembrane segment at 810–830 (VVIIAVVCCVVGTSLVWVVII) threads the bilayer. Residue Asn-1014 is glycosylated (N-linked (GlcNAc...) asparagine). The interval 1019-1093 (DFSTGPEPGS…KERTDFREEN (75 aa)) is disordered. The span at 1083–1093 (DKERTDFREEN) shows a compositional bias: basic and acidic residues.

In terms of assembly, interacts with EGFR, ERBB2 and ERBB4 (in vitro). As to expression, widely expressed.

The protein resides in the cell membrane. Its subcellular location is the cytoplasmic vesicle membrane. Its function is as follows. Plays a role in craniofacial and inner ear morphogenesis during embryonic development. Acts within the otic vesicle epithelium to control formation of the lateral semicircular canal in the inner ear, possibly by restricting the expression of NTN1. This chain is Leucine-rich repeats and immunoglobulin-like domains protein 3 (Lrig3), found in Mus musculus (Mouse).